A 591-amino-acid chain; its full sequence is Cytidine monophosphate-N-acetylneuraminic acid hydroxylase (591 aa).

The Rieske domain occupies 12 to 110; that stretch reads LEAEDVRNLK…AVLSETDGSL (99 aa). [2Fe-2S] cluster-binding residues include Cys-52, His-54, Cys-73, and His-76.

This sequence belongs to the CMP-Neu5Ac hydroxylase family. It depends on [2Fe-2S] cluster as a cofactor.

Its subcellular location is the cytoplasm. The catalysed reaction is CMP-N-acetyl-beta-neuraminate + 2 Fe(II)-[cytochrome b5] + O2 + 2 H(+) = CMP-N-glycoloyl-beta-neuraminate + 2 Fe(III)-[cytochrome b5] + H2O. Its pathway is amino-sugar metabolism; N-acetylneuraminate metabolism. Functionally, sialic acids are components of carbohydrate chains of glycoconjugates and are involved in cell-cell recognition and cell-pathogen interactions. Catalyzes the conversion of CMP-N-acetylneuraminic acid (CMP-Neu5Ac) into its hydroxylated derivative CMP-N-glycolylneuraminic acid (CMP-Neu5Gc), a sialic acid abundantly expressed at the surface of many cells. This Danio rerio (Zebrafish) protein is Cytidine monophosphate-N-acetylneuraminic acid hydroxylase (cmah).